Consider the following 1893-residue polypeptide: MMDLVLEEDVTVPGTLSGCSGLVPSVPDDLDGINPNAGLGNGLLPNVSEETVSPTRARNMKDFENQITELKKENFNLKLRIYFLEERMQQEFHGPTEHIYKTNIELKVEVESLKRELQEREQLLIKASKAVESLAEAGGSEIQRVKEDARKKVQQVEDLLTKRILLLEKDVTAAQAELEKAFAGTETEKALRLRLESKLSEMKKMHEGDLAMALVLDEKDRLIEELKLSLKSKEALIQCLKEEKSQMACPDENVSSGELRGLCAAPREEKERETEAAQMEHQKERNSFEERIQALEEDLREKEREIATEKKNSLKRDKAIQGLTMALKSKEKKVEELNSEIEKLSAAFAKAREALQKAQTQEFQGSEDYETALSGKEALSAALRSQNLTKSTENHRLRRSIKKITQELSDLQQERERLEKDLEEAHREKSKGDCTIRDLRNEVEKLRNEVNEREKAMENRYKSLLSESNKKLHNQEQVIKHLTESTNQKDVLLQKFNEKDLEVIQQNCYLMAAEDLELRSEGLITEKCSSQQPPGSKTIFSKEKKQSSDYEELIQVLKKEQDIYTHLVKSLQESDSINNLQAELNKIFALRKQLEQDVLSYQNLRKTLEEQISEIRRREEESFSLYSDQTSYLSICLEENNRFQVEHFSQEELKKKVSDLIQLVKELYTDNQHLKKTIFDLSCMGFQGNGFPDRLASTEQTELLASKEDEDTIKIGEDDEINFLSDQHLQQSNEIMKDLSKGGCKNGYLRHTESKISDCDGAHAPGCLEEGAFINLLAPLFNEKATLLLESRPDLLKVVRELLLGQLFLTEQEVSGEHLDGKTEKTPKQKGELVHFVQTNSFSKPHDELKLSCEAQLVKAGEVPKVGLKDASVQTVATEGDLLRFKHEATREAWEEKPINTALSAEHRPENLHGVPGWQAALLSLPGITNREAKKSRLPILIKPSRSLGNMYRLPATQEVVTQLQSQILELQGELKEFKTCNKQLHQKLILAEAVMEGRPTPDKTLLNAQPPVGAAYQDSPGEQKGIKTTSSVWRDKEMDSDQQRSYEIDSEICPPDDLASLPSCKENPEDVLSPTSVATYLSSKSQPSAKVSVMGTDQSESINTSNETEYLKQKIHDLETELEGYQNFIFQLQKHSQCSEAIITVLCGTEGAQDGLSKPKNGSDGEEMTFSSLHQVRYVKHVKILGPLAPEMIDSRVLENLKQQLEEQEYKLQKEQNLNMQLFSEIHNLQNKFRDLSPPRYDSLVQSQARELSLQRQQIKDGHGICVISRQHMNTMIKAFEELLQASDVDYCVAEGFQEQLNQCAELLEKLEKLFLNGKSVGVEMNTQNELMERIEEDNLTYQHLLPESPEPSASHALSDYETSEKSFFSRDQKQDNETEKTSVMVNSFSQDLLMEHIQEIRTLRKRLEESIKTNEKLRKQLERQGSEFVQGSTSIFASGSELHSSLTSEIHFLRKQNQALNAMLIKGSRDKQKENDKLRESLSRKTVSLEHLQREYASVKEENERLQKEGSEKERHNQQLIQEVRCSGQELSRVQEEVKLRQQLLSQNDKLLQSLRVELKAYEKLDEEHRRLREASGEGWKGQDPFRDLHSLLMEIQALRLQLERSIETSSTLQSRLKEQLARGAEKAQEGALTLAVQAVSIPEVPLQPDKHDGDKYPMESDNSFDLFDSSQAVTPKSVSETPPLSGNDTDSLSCDSGSSATSTPCVSRLVTGHHLWASKNGRHVLGLIEDYEALLKQISQGQRLLAEMDIQTQEAPSSTSQELGTKGPHPAPLSKFVSSVSTAKLTLEEAYRRLKLLWRVSLPEDGQCPLHCEQIGEMKAEVTKLHKKLFEQEKKLQNTMKLLQLSKRQEKVIFDQLVVTHKILRKARGNLELRPGGAHPGTCSPSRPGS.

Residues 51–94 are CM1 motif; interacts with the gTuRC; that stretch reads TVSPTRARNMKDFENQITELKKENFNLKLRIYFLEERMQQEFHG. The interaction with NCKAP5L stretch occupies residues 58 to 196; sequence RNMKDFENQI…TEKALRLRLE (139 aa). Ser547 bears the Phosphoserine mark. The interval 926–1208 is interaction with MAPRE1; the sequence is PGITNREAKK…LENLKQQLEE (283 aa). Thr1001 carries the post-translational modification Phosphothreonine. Disordered regions lie at residues 1015–1071 and 1084–1105; these read AAYQ…NPED and SKSQ…SINT. A compositionally biased stretch (basic and acidic residues) spans 1034 to 1048; that stretch reads WRDKEMDSDQQRSYE. Position 1238 is a phosphoserine (Ser1238). Positions 1347–1381 are disordered; it reads LPESPEPSASHALSDYETSEKSFFSRDQKQDNETE. Residues 1364–1381 show a composition bias toward basic and acidic residues; it reads TSEKSFFSRDQKQDNETE. Ser1490 bears the Phosphoserine mark. 2 stretches are compositionally biased toward basic and acidic residues: residues 1500 to 1519 and 1651 to 1661; these read SVKE…ERHN and PDKHDGDKYPM. 3 disordered regions span residues 1500–1521, 1646–1706, and 1754–1774; these read SVKE…HNQQ, EVPL…ATST, and QTQE…PHPA. Phosphoserine is present on residues Ser1663 and Ser1666. Polar residues-rich tracts occupy residues 1663–1706 and 1754–1766; these read SDNS…ATST and QTQE…SQEL. The tract at residues 1726-1768 is interaction with CDK5R1; the sequence is HVLGLIEDYEALLKQISQGQRLLAEMDIQTQEAPSSTSQELGT. The tract at residues 1726–1893 is interaction with PCNT and AKAP9; it reads HVLGLIEDYE…GTCSPSRPGS (168 aa). Residues 1861-1870 are required for centrosomal attachment, Golgi localization and CALM1 interaction; the sequence is VVTHKILRKA. The residue at position 1893 (Ser1893) is a Phosphoserine.

In terms of assembly, homodimer. Interacts with CDK5R1 (p35 form). CDK5RAP1, CDK5RAP2 and CDK5RAP3 show competitive binding to CDK5R1. May form a complex with CDK5R1 and CDK5. Interacts with pericentrin/PCNT; the interaction is leading to centrosomal and Golgi localization of CDK5RAP2 and PCNT. Interacts with AKAP9; the interaction targets CDK5RAP2 and AKAP9 to Golgi apparatus. Interacts with MAPRE1; the interaction is direct and targets CDK5RAP2 and EB1/MAPRE1 to microtubule plus ends. Interacts with TUBG1; the interaction is leading to the centrosomal localization of CDK5RAP2 and TUBG1. Interacts with TUBGCP3. Interacts with CALM1. Interacts with CDC20. Interacts with CEP68; degradation of CEP68 in early mitosis leads to removal of CDK5RAP2 from the centrosome which promotes centriole disengagement and subsequent centriole separation. Interacts with NCKAP5L. Forms a pericentrosomal complex with AKAP9, MAPRE1 and PDE4DIP isoform 13/MMG8/SMYLE; within this complex, MAPRE1 binding to CDK5RAP2 may be mediated by PDE4DIP. Interacts with LGALS3BP; this interaction may connect the pericentrosomal complex to the gamma-tubulin ring complex (gTuRC) to promote microtubule assembly and acetylation. Interacts with CCDC66. Associates (via CM1 motif) with TUBGCP2 of the gTuRC; the interaction plays a role in gTuRC activation. Post-translationally, phosphorylated in vitro by CDK5. In terms of tissue distribution, widely expressed. Expressed in heart, brain, placenta, lung, liver, skeletal muscle, kidney and pancreas.

The protein localises to the cytoplasm. It is found in the cytoskeleton. Its subcellular location is the microtubule organizing center. It localises to the centrosome. The protein resides in the golgi apparatus. Functionally, potential regulator of CDK5 activity via its interaction with CDK5R1. Negative regulator of centriole disengagement (licensing) which maintains centriole engagement and cohesion. Involved in regulation of mitotic spindle orientation. Plays a role in the spindle checkpoint activation by acting as a transcriptional regulator of both BUBR1 and MAD2 promoter. Together with EB1/MAPRE1, may promote microtubule polymerization, bundle formation, growth and dynamics at the plus ends. Regulates centrosomal maturation by recruitment of the gamma-tubulin ring complex (gTuRC) onto centrosomes. In complex with PDE4DIP isoform 13/MMG8/SMYLE, MAPRE1 and AKAP9, contributes to microtubules nucleation and extension from the centrosome to the cell periphery. Required for the recruitment of AKAP9 to centrosomes. Plays a role in neurogenesis. This Homo sapiens (Human) protein is CDK5 regulatory subunit-associated protein 2 (CDK5RAP2).